The sequence spans 135 residues: Small ribosomal subunit protein uS12 (135 aa).

Aspartate 89 is subject to 3-methylthioaspartic acid. Residues 106–135 (GVANRRQSRSKYGAKRPKAGAAQATKGGKK) are disordered. Basic residues predominate over residues 111 to 123 (RQSRSKYGAKRPK). Over residues 124-135 (AGAAQATKGGKK) the composition is skewed to low complexity.

This sequence belongs to the universal ribosomal protein uS12 family. In terms of assembly, part of the 30S ribosomal subunit. Contacts proteins S8 and S17. May interact with IF1 in the 30S initiation complex.

In terms of biological role, with S4 and S5 plays an important role in translational accuracy. Its function is as follows. Interacts with and stabilizes bases of the 16S rRNA that are involved in tRNA selection in the A site and with the mRNA backbone. Located at the interface of the 30S and 50S subunits, it traverses the body of the 30S subunit contacting proteins on the other side and probably holding the rRNA structure together. The combined cluster of proteins S8, S12 and S17 appears to hold together the shoulder and platform of the 30S subunit. The chain is Small ribosomal subunit protein uS12 from Hydrogenobaculum sp. (strain Y04AAS1).